A 180-amino-acid polypeptide reads, in one-letter code: E1B protein, small T-antigen (180 aa).

The interval 142-180 (GPAAPLARQGSQQEEQQQRQEEEQVQEEMRSGLDPPTEN) is disordered. Residues 157-172 (QQQRQEEEQVQEEMRS) show a composition bias toward basic and acidic residues.

It belongs to the adenoviridae E1B 19 kDa protein family.

The protein is E1B protein, small T-antigen of Simian adenovirus serotype 7 (SAdV-7).